An 881-amino-acid polypeptide reads, in one-letter code: Leucine--tRNA ligase (881 aa).

Residues 48-58 (PYPSGKLHMGH) carry the 'HIGH' region motif. Residues 638-642 (KMSKS) carry the 'KMSKS' region motif. Lys641 is an ATP binding site.

Belongs to the class-I aminoacyl-tRNA synthetase family.

It is found in the cytoplasm. The catalysed reaction is tRNA(Leu) + L-leucine + ATP = L-leucyl-tRNA(Leu) + AMP + diphosphate. The protein is Leucine--tRNA ligase of Herminiimonas arsenicoxydans.